The primary structure comprises 198 residues: MASGNAHIGKPAPDFTATAVVDGAFKEVKLSDYRGKYVVLFFYPLDFTFVCPTEIIAFSNHAEDFRKLGCEVLGVSVDSQFTHLAWINTPRKEGGLGPLNIPLLADVTRSLSENYGVLKTDEGIAYRGLFIIDAKGILRQITVNDLPVGRSVDEALRLVQAFQYTDEHGEVCPAGWKPGSDTIKPNVDDSKEYFSKHN.

Ala-2 is subject to N-acetylalanine. The Thioredoxin domain maps to 6 to 164; that stretch reads AHIGKPAPDF…ALRLVQAFQY (159 aa). Cys-51 serves as the catalytic Cysteine sulfenic acid (-SOH) intermediate. Phosphoserine is present on Ser-112. Thr-182 is subject to Phosphothreonine. At Lys-196 the chain carries N6-acetyllysine.

Belongs to the peroxiredoxin family. AhpC/Prx1 subfamily. As to quaternary structure, homodimer; disulfide-linked, upon oxidation. 5 homodimers assemble to form a ring-like decamer. Interacts with TIPIN. Post-translationally, the enzyme can be inactivated by further oxidation of the cysteine sulfenic acid (C(P)-SOH) to sulphinic acid (C(P)-SO2H) instead of its condensation to a disulfide bond. It can be reactivated by forming a transient disulfide bond with sulfiredoxin SRXN1, which reduces the cysteine sulfinic acid in an ATP- and Mg-dependent manner. Acetylation increases resistance to transition to high molecular-mass complexes. Deacetylated by HDAC6 which decreases reducing activity.

Its subcellular location is the cytoplasm. It carries out the reaction a hydroperoxide + [thioredoxin]-dithiol = an alcohol + [thioredoxin]-disulfide + H2O. Thiol-specific peroxidase that catalyzes the reduction of hydrogen peroxide and organic hydroperoxides to water and alcohols, respectively. Plays a role in cell protection against oxidative stress by detoxifying peroxides and as sensor of hydrogen peroxide-mediated signaling events. Might participate in the signaling cascades of growth factors and tumor necrosis factor-alpha by regulating the intracellular concentrations of H(2)O(2). This is Peroxiredoxin-2 (PRDX2) from Cricetulus griseus (Chinese hamster).